Here is a 284-residue protein sequence, read N- to C-terminus: MTAQNIDGKAIAQSIRTQLKDKVTARKEAGKRVPGLAVILVGADPASQVYVGSKRKACEEVGFISRSYDLDSSTSEDALLSLIDECNEDPTIDGILVQLPLPEHIEESKVIERIRPDKDVDGFHPYNVGRLAQRIPVLRSCTPMGIMTLLKSTGVDTFGLDAVVVGASNIVGRPMSLELLLAGCTTTTCHRFTRNLEDKVRSADLVVVAVGKPGFIPGDWIKPGAIVIDVGINRLESGQLVGDVEFDVASQHASFITPVPGGVGPMTIASLLENTLYACEQYHD.

NADP(+) is bound by residues 166–168 and Ile232; that span reads GAS.

Belongs to the tetrahydrofolate dehydrogenase/cyclohydrolase family. As to quaternary structure, homodimer.

It catalyses the reaction (6R)-5,10-methylene-5,6,7,8-tetrahydrofolate + NADP(+) = (6R)-5,10-methenyltetrahydrofolate + NADPH. The catalysed reaction is (6R)-5,10-methenyltetrahydrofolate + H2O = (6R)-10-formyltetrahydrofolate + H(+). It functions in the pathway one-carbon metabolism; tetrahydrofolate interconversion. Catalyzes the oxidation of 5,10-methylenetetrahydrofolate to 5,10-methenyltetrahydrofolate and then the hydrolysis of 5,10-methenyltetrahydrofolate to 10-formyltetrahydrofolate. The sequence is that of Bifunctional protein FolD from Shewanella pealeana (strain ATCC 700345 / ANG-SQ1).